The following is a 476-amino-acid chain: MLKVYNTLTRCEEEFKTLNEKEVKMYVCGPTVYDNTHLGHGRTYVSFDIIRRYLEHMGYTVNLVINFTDIDDKIIKRAYEKEKDPKEISEQFIKVFLDDMATLKVKPADIYPKVTEHISEIIAFIEKLIEKGFAYKTEDGVYFEVKKFKNYGKLSNINLEDLVSGARIETSEKKKNQKDFALWKTAKPGEPKWESPFGSGRPGWHIECSAMSSKYLGEQFDIHGGGRDLSFPHHENEIAQSSAYSGKDWVNYWLHTGFVMVNGEKMSKSLGNFVTIGDISKEYSPEILRFFFIQRHYRSPIDYTAESMNHVKNNLEKIYNVIENIRISLEKSEKSRTWDENEFLLYDILKNSKNNFYNAMNSDFNTVKALKSVFEVSNGVNKYLSLTKTPSEGLLLKALDFYKIIGEIFGLFENYFKESSDSDEEEFVTFLIELRSDVRLQKNYEMSDKIRDGLKNLGYQIEDNPKEGTVFKKINI.

A Zn(2+)-binding site is contributed by cysteine 28. The 'HIGH' region signature appears at 30–40; it reads PTVYDNTHLGH. Zn(2+) is bound by residues cysteine 208, histidine 233, and glutamate 237. The short motif at 265–269 is the 'KMSKS' region element; that stretch reads KMSKS. Position 268 (lysine 268) interacts with ATP.

This sequence belongs to the class-I aminoacyl-tRNA synthetase family. The cofactor is Zn(2+).

The protein resides in the cytoplasm. The enzyme catalyses tRNA(Cys) + L-cysteine + ATP = L-cysteinyl-tRNA(Cys) + AMP + diphosphate. The chain is Cysteine--tRNA ligase from Methanococcus maripaludis (strain DSM 14266 / JCM 13030 / NBRC 101832 / S2 / LL).